The sequence spans 137 residues: Small ribosomal subunit protein bS6 (137 aa).

Residues 96–137 (ITEASPMAKAKDERDTRRSSEERAPRAEATEEVKESAENTAE) are disordered. Over residues 104 to 137 (KAKDERDTRRSSEERAPRAEATEEVKESAENTAE) the composition is skewed to basic and acidic residues.

Belongs to the bacterial ribosomal protein bS6 family.

In terms of biological role, binds together with bS18 to 16S ribosomal RNA. This is Small ribosomal subunit protein bS6 from Shewanella piezotolerans (strain WP3 / JCM 13877).